The sequence spans 705 residues: Zinc finger protein 770 (705 aa).

Residue lysine 16 forms a Glycyl lysine isopeptide (Lys-Gly) (interchain with G-Cter in SUMO2) linkage. 3 C2H2-type zinc fingers span residues 31–53, 59–81, and 85–107; these read YICN…YLIH, FECD…QLTH, and FSCN…QQLH. Glycyl lysine isopeptide (Lys-Gly) (interchain with G-Cter in SUMO2) cross-links involve residues lysine 116, lysine 124, and lysine 149. C2H2-type zinc fingers lie at residues 164–186, 192–214, and 220–242; these read HACT…SLIH, FKCV…QLTH, and FQCC…KQIH. A Glycyl lysine isopeptide (Lys-Gly) (interchain with G-Cter in SUMO2) cross-link involves residue lysine 266. The C2H2-type 7; degenerate zinc-finger motif lies at 298–322; sequence FQCSECEECFESEQILNGHKCLPAR. C2H2-type zinc fingers lie at residues 485–507, 513–535, 640–662, and 668–690; these read CPCD…YLIH, FDCN…KLTH, YQCS…YLIH, and FECS…QLTH. Lysine 698 is covalently cross-linked (Glycyl lysine isopeptide (Lys-Gly) (interchain with G-Cter in SUMO2)).

Belongs to the krueppel C2H2-type zinc-finger protein family.

Its subcellular location is the nucleus. May be involved in transcriptional regulation. This Mus musculus (Mouse) protein is Zinc finger protein 770 (Znf770).